A 355-amino-acid polypeptide reads, in one-letter code: MNFDCIPREDLHGILCHMPKAELHIHIEGSLEPELIFELATRNRIQLPYPTIDELRAAYAFTDLQSFLDIYYAGASVLQKEADFFDMAWAYLKRAKAENVVHAEIFFDPQTHTARGIPFETVINGLDRAIRRGREELGLSASLILCFLRHLSEEDAFAALEDALPFRDKFIGVGLDSSERGNPPEKFTRVFARCRELGLRLVAHAGEEGSAEYISHSLDLLKAERIDHGVHCLDDPKLVARLVQQRIPLTVCPLSNVKLCVFPSLSAHNIGKLLAAGIAATINSDDPAYFGGYLNRNYTATFAALPGLGAKEAYQLARNSFEASFVNENIKEGWIRELDEFFTHYRENEGKWLPL.

Zn(2+)-binding residues include His24, His26, and His204. The Proton donor role is filled by Glu207. A Zn(2+)-binding site is contributed by Asp285. Asp286 is a binding site for substrate.

This sequence belongs to the metallo-dependent hydrolases superfamily. Adenosine and AMP deaminases family. Adenine deaminase type 2 subfamily. Requires Zn(2+) as cofactor.

The enzyme catalyses adenine + H2O + H(+) = hypoxanthine + NH4(+). In terms of biological role, catalyzes the hydrolytic deamination of adenine to hypoxanthine. Plays an important role in the purine salvage pathway and in nitrogen catabolism. This chain is Adenine deaminase, found in Geotalea uraniireducens (strain Rf4) (Geobacter uraniireducens).